We begin with the raw amino-acid sequence, 477 residues long: Ribulose bisphosphate carboxylase large chain (477 aa).

The propeptide occupies 1–2; it reads MS. Position 3 is an N-acetylproline (P3). An N6,N6,N6-trimethyllysine modification is found at K14. 2 residues coordinate substrate: N123 and T173. Residue K175 is the Proton acceptor of the active site. K177 is a substrate binding site. Mg(2+) contacts are provided by K201, D203, and E204. At K201 the chain carries N6-carboxylysine. H294 serves as the catalytic Proton acceptor. Residues R295, H327, and S379 each contribute to the substrate site.

It belongs to the RuBisCO large chain family. Type I subfamily. Heterohexadecamer of 8 large chains and 8 small chains; disulfide-linked. The disulfide link is formed within the large subunit homodimers. Requires Mg(2+) as cofactor. The disulfide bond which can form in the large chain dimeric partners within the hexadecamer appears to be associated with oxidative stress and protein turnover.

The protein resides in the plastid. The catalysed reaction is 2 (2R)-3-phosphoglycerate + 2 H(+) = D-ribulose 1,5-bisphosphate + CO2 + H2O. It carries out the reaction D-ribulose 1,5-bisphosphate + O2 = 2-phosphoglycolate + (2R)-3-phosphoglycerate + 2 H(+). Its function is as follows. RuBisCO catalyzes two reactions: the carboxylation of D-ribulose 1,5-bisphosphate, the primary event in carbon dioxide fixation, as well as the oxidative fragmentation of the pentose substrate in the photorespiration process. Both reactions occur simultaneously and in competition at the same active site. This Lathraea clandestina (Purple toothwort) protein is Ribulose bisphosphate carboxylase large chain (rbcL).